The sequence spans 254 residues: Leucyl/phenylalanyl-tRNA--protein transferase (254 aa).

It belongs to the L/F-transferase family.

The protein localises to the cytoplasm. It catalyses the reaction N-terminal L-lysyl-[protein] + L-leucyl-tRNA(Leu) = N-terminal L-leucyl-L-lysyl-[protein] + tRNA(Leu) + H(+). The enzyme catalyses N-terminal L-arginyl-[protein] + L-leucyl-tRNA(Leu) = N-terminal L-leucyl-L-arginyl-[protein] + tRNA(Leu) + H(+). The catalysed reaction is L-phenylalanyl-tRNA(Phe) + an N-terminal L-alpha-aminoacyl-[protein] = an N-terminal L-phenylalanyl-L-alpha-aminoacyl-[protein] + tRNA(Phe). Functions in the N-end rule pathway of protein degradation where it conjugates Leu, Phe and, less efficiently, Met from aminoacyl-tRNAs to the N-termini of proteins containing an N-terminal arginine or lysine. The sequence is that of Leucyl/phenylalanyl-tRNA--protein transferase from Burkholderia orbicola (strain MC0-3).